Consider the following 299-residue polypeptide: tRNA dimethylallyltransferase (299 aa).

Residue 10-17 (GATATGKS) coordinates ATP. Position 12-17 (12-17 (TATGKS)) interacts with substrate. An interaction with substrate tRNA region spans residues 35–38 (DSRQ).

Belongs to the IPP transferase family. As to quaternary structure, monomer. Requires Mg(2+) as cofactor.

The catalysed reaction is adenosine(37) in tRNA + dimethylallyl diphosphate = N(6)-dimethylallyladenosine(37) in tRNA + diphosphate. Functionally, catalyzes the transfer of a dimethylallyl group onto the adenine at position 37 in tRNAs that read codons beginning with uridine, leading to the formation of N6-(dimethylallyl)adenosine (i(6)A). The protein is tRNA dimethylallyltransferase of Rippkaea orientalis (strain PCC 8801 / RF-1) (Cyanothece sp. (strain PCC 8801)).